The chain runs to 318 residues: Polyprenal reductase (318 aa).

The Cytoplasmic portion of the chain corresponds to 1-11 (MAPWAEAEHSA). The chain crosses the membrane as a helical span at residues 12 to 34 (LNPLRAVWLTLTAAFLLTLLLQL). Topologically, residues 35 to 80 (LPPGLLPGCAIFQDLIRYGKTKCGEPSRPAACRAFDVPKRYFSHFY) are lumenal. Residues 81-101 (IISVLWNGFLLWCLTQSLFLG) traverse the membrane as a helical segment. Topologically, residues 102-117 (APFPSWLHGLLRILGA) are cytoplasmic. The chain crosses the membrane as a helical span at residues 118-138 (AQFQGGELALSAFLVLVFLWL). At 139–157 (HSLRRLFECLYVSVFSNVM) the chain is on the lumenal side. Residues 158-178 (IHVVQYCFGLVYYVLVGLTVL) traverse the membrane as a helical segment. At 179-194 (SQVPMDGRNAYITGKN) the chain is on the cytoplasmic side. Residues 195-215 (LLMQARWFHILGMMMFIWSSA) form a helical membrane-spanning segment. At 216 to 260 (HQYKCHVILGNLRKNKAGVVIHCNHRIPFGDWFEYVSSPNYLAEL) the chain is on the lumenal side. The chain crosses the membrane as a helical span at residues 261 to 281 (MIYVSMAVTFGFHNLTWWLVV). Residues 282 to 318 (TNVFFNQALSAFLSHQFYKSKFVSYPKHRKAFLPFLF) are Cytoplasmic-facing.

This sequence belongs to the steroid 5-alpha reductase family. Polyprenal reductase subfamily. In terms of tissue distribution, expressed in preadipocytes (at protein level). Overexpressed in hormone-refractory prostate cancers (HRPC). Almost no or little expression in normal adult organs.

It is found in the endoplasmic reticulum membrane. It catalyses the reaction a di-trans,poly-cis-dolichal + NADP(+) = a di-trans,poly-cis-polyprenal + NADPH + H(+). It carries out the reaction a 3-oxo-5alpha-steroid + NADP(+) = a 3-oxo-Delta(4)-steroid + NADPH + H(+). The catalysed reaction is androst-4-ene-3,17-dione + NADPH + H(+) = 5alpha-androstan-3,17-dione + NADP(+). The enzyme catalyses 17beta-hydroxy-5alpha-androstan-3-one + NADP(+) = testosterone + NADPH + H(+). The protein operates within protein modification; protein glycosylation. Functionally, plays a key role in early steps of protein N-linked glycosylation by being involved in the conversion of polyprenol into dolichol. Acts as a polyprenal reductase that mediates the reduction of polyprenal into dolichal in a NADP-dependent mechanism. Dolichols are required for the synthesis of dolichol-linked monosaccharides and the oligosaccharide precursor used for N-glycosylation. Also able to convert testosterone (T) into 5-alpha-dihydrotestosterone (DHT). In Homo sapiens (Human), this protein is Polyprenal reductase.